Here is a 409-residue protein sequence, read N- to C-terminus: Broad specificity amino-acid racemase (409 aa).

Residues Met1–Ala24 form the signal peptide. An intrachain disulfide couples Cys71 to Cys97. Catalysis depends on Lys75, which acts as the Proton acceptor. The residue at position 75 (Lys75) is an N6-(pyridoxal phosphate)lysine. Arg174 is a substrate binding site. Tyr301 serves as the catalytic Proton acceptor. Position 349 (Met349) interacts with substrate.

The protein belongs to the alanine racemase family. Bsr subfamily. In terms of assembly, monomer. Forms a head-to-tail homodimer in the structure. Pyridoxal 5'-phosphate is required as a cofactor.

The protein localises to the periplasm. The catalysed reaction is an L-alpha-amino acid = a D-alpha-amino acid. It carries out the reaction L-lysine = D-lysine. It catalyses the reaction L-arginine = D-arginine. The enzyme catalyses L-alanine = D-alanine. Its activity is regulated as follows. Activity is enhanced by Co(2+), Mn(2+) and Sr(2+), and decreased by Cu(2+). Amino-acid racemase that catalyzes the interconversion of L-lysine and D-lysine, and L-arginine and D-arginine. To a lesser extent, is also able to interconvert alanine and isoleucine enantiomers. The protein is Broad specificity amino-acid racemase of Pseudomonas putida (Arthrobacter siderocapsulatus).